The sequence spans 287 residues: Shikimate dehydrogenase (NADP(+)) (287 aa).

Residues 18 to 20 (SYS) and T66 each bind shikimate. Residue K70 is the Proton acceptor of the active site. E82 lines the NADP(+) pocket. Shikimate-binding residues include N91 and D106. NADP(+)-binding positions include 130–134 (GSGGA) and M228. Y230 provides a ligand contact to shikimate. NADP(+) is bound at residue G251.

Belongs to the shikimate dehydrogenase family. As to quaternary structure, homodimer.

The enzyme catalyses shikimate + NADP(+) = 3-dehydroshikimate + NADPH + H(+). The protein operates within metabolic intermediate biosynthesis; chorismate biosynthesis; chorismate from D-erythrose 4-phosphate and phosphoenolpyruvate: step 4/7. Its function is as follows. Involved in the biosynthesis of the chorismate, which leads to the biosynthesis of aromatic amino acids. Catalyzes the reversible NADPH linked reduction of 3-dehydroshikimate (DHSA) to yield shikimate (SA). The polypeptide is Shikimate dehydrogenase (NADP(+)) (Chlorobium chlorochromatii (strain CaD3)).